Here is a 356-residue protein sequence, read N- to C-terminus: tRNA-specific 2-thiouridylase MnmA 1 (356 aa).

ATP is bound by residues 8–15 and M34; that span reads GMSGGVDS. C103 acts as the Nucleophile in catalysis. Residues C103 and C199 are joined by a disulfide bond. G127 provides a ligand contact to ATP. The tract at residues 149 to 151 is interaction with tRNA; sequence KDQ. Catalysis depends on C199, which acts as the Cysteine persulfide intermediate. An interaction with tRNA region spans residues 305 to 306; it reads RY.

It belongs to the MnmA/TRMU family.

The protein localises to the cytoplasm. The enzyme catalyses S-sulfanyl-L-cysteinyl-[protein] + uridine(34) in tRNA + AH2 + ATP = 2-thiouridine(34) in tRNA + L-cysteinyl-[protein] + A + AMP + diphosphate + H(+). Its function is as follows. Catalyzes the 2-thiolation of uridine at the wobble position (U34) of tRNA, leading to the formation of s(2)U34. This Clostridium botulinum (strain ATCC 19397 / Type A) protein is tRNA-specific 2-thiouridylase MnmA 1.